Here is a 207-residue protein sequence, read N- to C-terminus: MAASTASHRPIKGILKNKSSTTSSVVSTAEQPGKSVDEELSKKSQKWDEMSILATYHPADKDYGLMKIDEPSTPYHSMVADDEDALSDSETTEALTPDILARKLTAAAAESLEPKYRVREQESSGDEDSDLSPEEREKKRQFEMKRKLHYNEGLNIKLARQLISKDLNDEEEDEEMSETAAGESMNMEESSQGSATSDQLQNKSQSS.

Disordered regions lie at residues 1-44 (MAAS…SKKS), 65-97 (LMKI…ALTP), and 110-146 (ESLE…EMKR). Position 2 is an N-acetylalanine (A2). Positions 12 to 17 (KGILKN) are required for binding PPP1CC. The span at 19–28 (SSTTSSVVST) shows a compositional bias: low complexity. The span at 35–44 (SVDEELSKKS) shows a compositional bias: basic and acidic residues. Residues 43–55 (KSQKWDEMSILAT) are required for binding PPP1CC. A Phosphoserine; by ATM modification is found at S44. A Phosphothreonine; by GSK3 modification is found at T73. Residues 80–91 (ADDEDALSDSET) are compositionally biased toward acidic residues. Phosphoserine is present on residues S87 and S89. 2 positions are modified to phosphothreonine: T92 and T96. Basic and acidic residues predominate over residues 112–122 (LEPKYRVREQE). A phosphoserine mark is found at S123, S124, S129, and S132. Positions 123-132 (SSGDEDSDLS) are enriched in acidic residues. Basic and acidic residues predominate over residues 133-145 (PEEREKKRQFEMK). The tract at residues 149–152 (HYNE) is required for binding PPP1CC catalytic center, displacing metal ions and inhibition of PPP1CC catalytic activity. A disordered region spans residues 165–207 (KDLNDEEEDEEMSETAAGESMNMEESSQGSATSDQLQNKSQSS). The segment covering 168 to 177 (NDEEEDEEMS) has biased composition (acidic residues). Residues 187–207 (MEESSQGSATSDQLQNKSQSS) are compositionally biased toward polar residues.

The protein belongs to the protein phosphatase inhibitor 2 family. Heterodimer with PP1. In terms of processing, phosphorylation on Ser-44 by ATM activates PP1 by dissociating the PP1-PPP1R2 complex. Phosphorylation on Thr-73 by GSK3 activates PP1 by dissociating the PP1-PPP1R2 complex.

Inhibitor of protein-phosphatase 1. The polypeptide is Protein phosphatase inhibitor 2 (PPP1R2) (Bos taurus (Bovine)).